Reading from the N-terminus, the 311-residue chain is Methionyl-tRNA formyltransferase (311 aa).

109–112 (SLLP) lines the (6S)-5,6,7,8-tetrahydrofolate pocket.

It belongs to the Fmt family.

The catalysed reaction is L-methionyl-tRNA(fMet) + (6R)-10-formyltetrahydrofolate = N-formyl-L-methionyl-tRNA(fMet) + (6S)-5,6,7,8-tetrahydrofolate + H(+). In terms of biological role, attaches a formyl group to the free amino group of methionyl-tRNA(fMet). The formyl group appears to play a dual role in the initiator identity of N-formylmethionyl-tRNA by promoting its recognition by IF2 and preventing the misappropriation of this tRNA by the elongation apparatus. The polypeptide is Methionyl-tRNA formyltransferase (Marinobacter nauticus (strain ATCC 700491 / DSM 11845 / VT8) (Marinobacter aquaeolei)).